Here is a 144-residue protein sequence, read N- to C-terminus: Peroxisomal membrane protein PEX34 (144 aa).

Helical transmembrane passes span 18–30 (NIWS…LDFF), 52–73 (VWLC…KLCK), and 109–131 (TAAL…RLFK).

In terms of assembly, homooligomer. Interacts with PEX11, PEX25 and PEX27.

It localises to the peroxisome membrane. Its function is as follows. In concert with the three peroxisome divisional factors, PEX11, PEX25 and PEX27, controls peroxisome morphology and abundance under conditions of peroxisome proliferation. Maintains mature peroxisomes in actively dividing cells. This is Peroxisomal membrane protein PEX34 (PEX34) from Saccharomyces cerevisiae (strain ATCC 204508 / S288c) (Baker's yeast).